Consider the following 316-residue polypeptide: Ester hydrolase C11orf54 homolog (316 aa).

His267, His269, and His279 together coordinate Zn(2+).

In terms of assembly, monomer. Zn(2+) serves as cofactor.

It is found in the nucleus. The protein localises to the cytoplasm. Functionally, exhibits ester hydrolase activity on the substrate p-nitrophenyl acetate, in vitro. May regulate DNA damage and repair by regulating HIF1A degradation via chaperone-mediated autophagy (CMA). The protein is Ester hydrolase C11orf54 homolog of Xenopus laevis (African clawed frog).